The following is a 264-amino-acid chain: Indole-3-glycerol phosphate synthase (264 aa).

The protein belongs to the TrpC family.

The catalysed reaction is 1-(2-carboxyphenylamino)-1-deoxy-D-ribulose 5-phosphate + H(+) = (1S,2R)-1-C-(indol-3-yl)glycerol 3-phosphate + CO2 + H2O. It participates in amino-acid biosynthesis; L-tryptophan biosynthesis; L-tryptophan from chorismate: step 4/5. The protein is Indole-3-glycerol phosphate synthase of Stenotrophomonas maltophilia (strain R551-3).